We begin with the raw amino-acid sequence, 160 residues long: Small RNA binding protein 1 (160 aa).

An RRM domain is found at phenylalanine 8–glutamine 86. The tract at residues asparagine 82–asparagine 160 is disordered. Residues arginine 87–asparagine 160 show a composition bias toward gly residues. Residues glycine 88–glycine 157 are glycine-rich (GR) required for cell-to-cell movement.

This sequence belongs to the GR-RBP family. As to quaternary structure, binds to small phloem-mobile single-stranded RNAs (ss-sRNA, e.g. small interfering RNA (siRNA) and microRNA (miRNA)) in the phloeme exudate, including viral-derived sRNA (vsiRNA). In terms of tissue distribution, accumulates in phloem exudates.

The protein localises to the secreted. Possibly has a role in RNA transcription or processing during stress. Binds sequence non-specifically to RNAs and DNAs. Mediates cell-to-cell trafficking of RNA interference (RNAi) signals (small RNAs (sRNA), e.g. small interfering RNA (siRNA) and microRNA (miRNA)) which regulate growth and development, as well as responses to environmental inputs, including pathogen attack; can compromise zucchini yellow mosaic virus (ZYMV) and tobacco rattle virus (TRV) infections at the early stage. This Cucumis sativus (Cucumber) protein is Small RNA binding protein 1.